Reading from the N-terminus, the 210-residue chain is V-type ATP synthase subunit D (210 aa).

It belongs to the V-ATPase D subunit family.

In terms of biological role, produces ATP from ADP in the presence of a proton gradient across the membrane. The sequence is that of V-type ATP synthase subunit D from Coprothermobacter proteolyticus (strain ATCC 35245 / DSM 5265 / OCM 4 / BT).